The chain runs to 319 residues: Type II methyltransferase M.MpnI (319 aa).

It belongs to the N(4)/N(6)-methyltransferase family.

It carries out the reaction a 2'-deoxyadenosine in DNA + S-adenosyl-L-methionine = an N(6)-methyl-2'-deoxyadenosine in DNA + S-adenosyl-L-homocysteine + H(+). Its function is as follows. A methylase that recognizes the double-stranded sequence 5'-CTAT-3' and methylates A-3 on one strand; probably responsible for all of the methylation on this site in the genome. This is Type II methyltransferase M.MpnI from Mycoplasma pneumoniae (strain ATCC 29342 / M129 / Subtype 1) (Mycoplasmoides pneumoniae).